Consider the following 197-residue polypeptide: Probable nicotinate-nucleotide adenylyltransferase (197 aa).

It belongs to the NadD family.

The catalysed reaction is nicotinate beta-D-ribonucleotide + ATP + H(+) = deamido-NAD(+) + diphosphate. The protein operates within cofactor biosynthesis; NAD(+) biosynthesis; deamido-NAD(+) from nicotinate D-ribonucleotide: step 1/1. Catalyzes the reversible adenylation of nicotinate mononucleotide (NaMN) to nicotinic acid adenine dinucleotide (NaAD). This is Probable nicotinate-nucleotide adenylyltransferase from Bordetella pertussis (strain Tohama I / ATCC BAA-589 / NCTC 13251).